The sequence spans 210 residues: RNA chaperone ProQ (210 aa).

Basic and acidic residues-rich tracts occupy residues 103–124 (LKES…EKAK) and 132–144 (RKAD…DKPK). The interval 103 to 148 (LKESKERVFASRRTNNKEEKAKQPRRPAPRKADAAAKSDKPKAAPK) is disordered.

It belongs to the ProQ family.

Its subcellular location is the cytoplasm. RNA chaperone with significant RNA binding, RNA strand exchange and RNA duplexing activities. The polypeptide is RNA chaperone ProQ (Aeromonas salmonicida (strain A449)).